Reading from the N-terminus, the 252-residue chain is Phosphosulfolactate synthase (252 aa).

Belongs to the phosphosulfolactate synthase family.

The enzyme catalyses (2R)-O-phospho-3-sulfolactate = phosphoenolpyruvate + sulfite + H(+). In terms of biological role, catalyzes the addition of sulfite to phosphoenolpyruvate (PEP) to yield (2R)-phospho-3-sulfolactate (PSL). Is probably involved in the biosynthesis of L-sulfolactate, which is a major constituent of sporulating cells and mature spores. In Bacillus subtilis (strain 168), this protein is Phosphosulfolactate synthase (yitD).